We begin with the raw amino-acid sequence, 93 residues long: MQTAYWVMLMMMVCITAPLPEGGKPNSGIRGLVPNDLTPQHTLRSLISRRQTDVLLDATLLTTPAPEQRLFCFWKSCWPRPYPWRRRDLNGKR.

The N-terminal stretch at 1–22 (MQTAYWVMLMMMVCITAPLPEG) is a signal peptide. The propeptide occupies 23-69 (GKPNSGIRGLVPNDLTPQHTLRSLISRRQTDVLLDATLLTTPAPEQR). A disulfide bridge links cysteine 72 with cysteine 77. Tryptophan 74 is modified (D-tryptophan). Residues 79–93 (PRPYPWRRRDLNGKR) constitute a propeptide that is removed on maturation.

The protein belongs to the conotoxin C superfamily. Consomatin family. Expressed by the venom duct.

It is found in the secreted. Functionally, potently activates human somatostatin receptors (SSTR) with a specific activation of SSTR2 (EC(50)=2.6 nM). This Conus geographus (Geography cone) protein is Consomatin G1.